The chain runs to 565 residues: Dihydroxy-acid dehydratase (565 aa).

Asp80 contacts Mg(2+). [2Fe-2S] cluster is bound at residue Cys121. Mg(2+)-binding residues include Asp122 and Lys123. Lys123 carries the post-translational modification N6-carboxylysine. A [2Fe-2S] cluster-binding site is contributed by Cys194. Position 447 (Glu447) interacts with Mg(2+). The Proton acceptor role is filled by Ser473.

It belongs to the IlvD/Edd family. Homodimer. The cofactor is [2Fe-2S] cluster. Mg(2+) serves as cofactor.

It carries out the reaction (2R)-2,3-dihydroxy-3-methylbutanoate = 3-methyl-2-oxobutanoate + H2O. The enzyme catalyses (2R,3R)-2,3-dihydroxy-3-methylpentanoate = (S)-3-methyl-2-oxopentanoate + H2O. It functions in the pathway amino-acid biosynthesis; L-isoleucine biosynthesis; L-isoleucine from 2-oxobutanoate: step 3/4. Its pathway is amino-acid biosynthesis; L-valine biosynthesis; L-valine from pyruvate: step 3/4. Functions in the biosynthesis of branched-chain amino acids. Catalyzes the dehydration of (2R,3R)-2,3-dihydroxy-3-methylpentanoate (2,3-dihydroxy-3-methylvalerate) into 2-oxo-3-methylpentanoate (2-oxo-3-methylvalerate) and of (2R)-2,3-dihydroxy-3-methylbutanoate (2,3-dihydroxyisovalerate) into 2-oxo-3-methylbutanoate (2-oxoisovalerate), the penultimate precursor to L-isoleucine and L-valine, respectively. This is Dihydroxy-acid dehydratase from Pelodictyon phaeoclathratiforme (strain DSM 5477 / BU-1).